A 1845-amino-acid polypeptide reads, in one-letter code: Proteasome activator complex subunit 4 (1845 aa).

The span at 1 to 13 (MEPAERAGGRDPL) shows a compositional bias: basic and acidic residues. The interval 1–26 (MEPAERAGGRDPLEPGGRPGPDPQGF) is disordered. 2 HEAT repeats span residues 475–519 (PEGP…LVDC) and 1000–1039 (NFCC…NHSG). The residue at position 1123 (S1123) is a Phosphoserine. 2 HEAT repeats span residues 1181–1219 (RVLP…QLKR) and 1356–1394 (DAFL…GSKH). At S1616 the chain carries Phosphoserine. HEAT repeat units lie at residues 1638–1676 (PHQV…YNLF) and 1682–1720 (EDAV…CNFL). Residues 1652–1740 (ARSSSWHARY…EQLCKTKLPK (89 aa)) form a bromodomain-like (BRDL) region.

It belongs to the BLM10 family. As to quaternary structure, homodimer. Component of the spermatoproteasome, a form of the proteasome specifically found in testis. Interacts with the 20S and 26S proteasomes. Post-translationally, phosphorylated.

Its subcellular location is the cytoplasm. It is found in the cytosol. The protein localises to the nucleus. The protein resides in the nucleus speckle. Functionally, associated component of the proteasome that specifically recognizes acetylated histones and promotes ATP- and ubiquitin-independent degradation of core histones during spermatogenesis and DNA damage response. Recognizes and binds acetylated histones via its bromodomain-like (BRDL) region and activates the proteasome by opening the gated channel for substrate entry. Binds to the core proteasome via its C-terminus, which occupies the same binding sites as the proteasomal ATPases, opening the closed structure of the proteasome via an active gating mechanism. Component of the spermatoproteasome, a form of the proteasome specifically found in testis: binds to acetylated histones and promotes degradation of histones, thereby participating actively to the exchange of histones during spermatogenesis. Also involved in DNA damage response in somatic cells, by promoting degradation of histones following DNA double-strand breaks. The chain is Proteasome activator complex subunit 4 (PSME4) from Bos taurus (Bovine).